The chain runs to 119 residues: Polyhedrin (119 aa).

The protein belongs to the polyhedrin family.

Functionally, major component of the virus occlusion bodies, which are large proteinaceous structures (polyhedra), that protect the virus from the outside environment for extended periods until they are ingested by insect larvae. This chain is Polyhedrin (PH), found in Antheraea pernyi nuclear polyhedrosis virus (ApNPV).